A 235-amino-acid chain; its full sequence is Ubiquinone/menaquinone biosynthesis C-methyltransferase UbiE (235 aa).

S-adenosyl-L-methionine is bound by residues Thr59, Asp84, and Ser123.

It belongs to the class I-like SAM-binding methyltransferase superfamily. MenG/UbiE family.

The catalysed reaction is a 2-demethylmenaquinol + S-adenosyl-L-methionine = a menaquinol + S-adenosyl-L-homocysteine + H(+). It carries out the reaction a 2-methoxy-6-(all-trans-polyprenyl)benzene-1,4-diol + S-adenosyl-L-methionine = a 5-methoxy-2-methyl-3-(all-trans-polyprenyl)benzene-1,4-diol + S-adenosyl-L-homocysteine + H(+). It functions in the pathway quinol/quinone metabolism; menaquinone biosynthesis; menaquinol from 1,4-dihydroxy-2-naphthoate: step 2/2. It participates in cofactor biosynthesis; ubiquinone biosynthesis. Functionally, methyltransferase required for the conversion of demethylmenaquinol (DMKH2) to menaquinol (MKH2) and the conversion of 2-polyprenyl-6-methoxy-1,4-benzoquinol (DDMQH2) to 2-polyprenyl-3-methyl-6-methoxy-1,4-benzoquinol (DMQH2). The chain is Ubiquinone/menaquinone biosynthesis C-methyltransferase UbiE from Campylobacter jejuni subsp. jejuni serotype O:2 (strain ATCC 700819 / NCTC 11168).